Reading from the N-terminus, the 451-residue chain is MNKKILFLGVGGIGVSALAIAAKRLGAHVAGYDSVANKLTAKLEALGIVIFTSPNGVDVANFDIVVYSSAILSSHPLLSQARSLGIQCLQRAMFLAVLMKDFSYSIAITGTHGKTTTSSVLATLLCQLDKYSSFIVGGVVKYADSNIQVNGTDKLVIEADESDASFLFLSPQVVIITNIDLDHMATYNNSYQTLLENFTDFVSKESVKSIYLCVDDQGCRDLLAKYNQSDKNVTSYGFSINADVQIYDYHIIDEITHFKIRYKGDDLSFKLQLPGRYNVQNATACIIACLDLGFKYEDIRNALIKVTGVARRFDLYTKVISGHQVTVIDDYGHHPVEVANSISAVRDRYPNKKIIHVFQPHRYTRNRDLIKDWPKALSLADQLILLPTYSADEQIIKGAESQDIVKGLSGYLLADGFDHAIYFLEKLANENTVILIQGAGDVTNLVEILSE.

110 to 116 (GTHGKTT) contributes to the ATP binding site.

This sequence belongs to the MurCDEF family.

Its subcellular location is the cytoplasm. It carries out the reaction UDP-N-acetyl-alpha-D-muramate + L-alanine + ATP = UDP-N-acetyl-alpha-D-muramoyl-L-alanine + ADP + phosphate + H(+). It participates in cell wall biogenesis; peptidoglycan biosynthesis. In terms of biological role, cell wall formation. The polypeptide is UDP-N-acetylmuramate--L-alanine ligase (Francisella tularensis subsp. tularensis (strain WY96-3418)).